A 355-amino-acid polypeptide reads, in one-letter code: S-adenosylmethionine:tRNA ribosyltransferase-isomerase (355 aa).

It belongs to the QueA family. In terms of assembly, monomer.

It is found in the cytoplasm. The catalysed reaction is 7-aminomethyl-7-carbaguanosine(34) in tRNA + S-adenosyl-L-methionine = epoxyqueuosine(34) in tRNA + adenine + L-methionine + 2 H(+). It functions in the pathway tRNA modification; tRNA-queuosine biosynthesis. Its function is as follows. Transfers and isomerizes the ribose moiety from AdoMet to the 7-aminomethyl group of 7-deazaguanine (preQ1-tRNA) to give epoxyqueuosine (oQ-tRNA). The sequence is that of S-adenosylmethionine:tRNA ribosyltransferase-isomerase from Photorhabdus laumondii subsp. laumondii (strain DSM 15139 / CIP 105565 / TT01) (Photorhabdus luminescens subsp. laumondii).